The following is a 229-amino-acid chain: Cytidylate kinase (229 aa).

Residue 12-20 coordinates ATP; the sequence is GPSGSGKGT.

This sequence belongs to the cytidylate kinase family. Type 1 subfamily.

The protein resides in the cytoplasm. The catalysed reaction is CMP + ATP = CDP + ADP. The enzyme catalyses dCMP + ATP = dCDP + ADP. The polypeptide is Cytidylate kinase (Stutzerimonas stutzeri (strain A1501) (Pseudomonas stutzeri)).